Here is an 834-residue protein sequence, read N- to C-terminus: Glycerol-3-phosphate acyltransferase (834 aa).

The short motif at 309–314 (CHRSHI) is the HXXXXD motif element.

The protein belongs to the GPAT/DAPAT family.

The protein resides in the cell inner membrane. The enzyme catalyses sn-glycerol 3-phosphate + an acyl-CoA = a 1-acyl-sn-glycero-3-phosphate + CoA. It participates in phospholipid metabolism; CDP-diacylglycerol biosynthesis; CDP-diacylglycerol from sn-glycerol 3-phosphate: step 1/3. This is Glycerol-3-phosphate acyltransferase from Pseudomonas aeruginosa (strain UCBPP-PA14).